A 133-amino-acid chain; its full sequence is Small ribosomal subunit protein uS9 (133 aa).

This sequence belongs to the universal ribosomal protein uS9 family.

This Ureaplasma urealyticum serovar 10 (strain ATCC 33699 / Western) protein is Small ribosomal subunit protein uS9.